The following is a 402-amino-acid chain: Calcium-responsive transactivator (402 aa).

The interval 1 to 148 (MSVAFASARP…TLPTTSMSMS (148 aa)) is N-terminal auto-inhibitory domain; necessary for interaction with SMARCA4/BRG1. The SH2-binding signature appears at 50 to 53 (YQQI). 5 disordered regions span residues 72 to 129 (QSLL…GPNH), 141 to 170 (PTTS…SVPL), 195 to 250 (MHQQ…SSQQ), 262 to 290 (QYGH…YQPA), and 305 to 402 (TQHY…NYQQ). Residues 92–106 (QSGSAQGLHSQGSLS) show a composition bias toward low complexity. The segment covering 117–129 (SLMQAQIGNGPNH) has biased composition (polar residues). The methionine-rich intra-molecular domain stretch occupies residues 149–237 (GSGHGSGPGY…GGGVMGQRPM (89 aa)). Low complexity predominate over residues 196–224 (HQQAASSHYSAAQGGSQHYQGQSMAMMGQ). An MFD domain region spans residues 251 to 323 (YLGQEEYYGG…SQYSQQQTGY (73 aa)). Low complexity-rich tracts occupy residues 311-379 (GGNS…RASQ) and 390-402 (YGYE…NYQQ). A necessary for nuclear localization region spans residues 340–402 (NQQSYPGQQQ…EQGQYGNYQQ (63 aa)). The SH2-binding signature appears at 359-362 (SQYS). The SH3-binding motif lies at 377–385 (ASQTGPSTQ). The tract at residues 393–402 (EQGQYGNYQQ) is necessary for interaction with CREBBP and for the recruitment of CREBBP to the nuclear bodies. The SH2-binding signature appears at 397-400 (YGNY).

Belongs to the SS18 family. As to quaternary structure, homodimer. Dimerization may be necessary for its function in neuronal dendritic development. Interacts (via C-terminus) with CREBBP (via N-terminus), EP300 and SMARCA4/BRG1. Interacts with the nBAF complex. Association with CREBBP facilitates transcription while the association with SMARCA4/BRG1 suppresses CREST-mediated transcription in resting neurons.

The protein localises to the nucleus. It is found in the chromosome. It localises to the centromere. The protein resides in the kinetochore. Functionally, transcriptional activator which is required for calcium-dependent dendritic growth and branching in cortical neurons. Recruits CREB-binding protein (CREBBP) to nuclear bodies. Component of the CREST-BRG1 complex, a multiprotein complex that regulates promoter activation by orchestrating a calcium-dependent release of a repressor complex and a recruitment of an activator complex. In resting neurons, transcription of the c-FOS promoter is inhibited by BRG1-dependent recruitment of a phospho-RB1-HDAC1 repressor complex. Upon calcium influx, RB1 is dephosphorylated by calcineurin, which leads to release of the repressor complex. At the same time, there is increased recruitment of CREBBP to the promoter by a CREST-dependent mechanism, which leads to transcriptional activation. The CREST-BRG1 complex also binds to the NR2B promoter, and activity-dependent induction of NR2B expression involves a release of HDAC1 and recruitment of CREBBP. The protein is Calcium-responsive transactivator (SS18L1) of Bos taurus (Bovine).